Consider the following 762-residue polypeptide: Polymeric immunoglobulin receptor (762 aa).

The first 18 residues, 1–18 (MTLFFLTCLLAVFPVVSM), serve as a signal peptide directing secretion. The region spanning 19–120 (KSPIFGPPEI…GVGINNRGLS (102 aa)) is the Ig-like V-type 1; required for binding to polymeric IgA and IgM domain. Over 19 to 636 (KSPIFGPPEI…SSAGQGGSSK (618 aa)) the chain is Extracellular. 2 disulfides stabilise this stretch: Cys40–Cys110 and Cys56–Cys64. N-linked (GlcNAc...) asparagine glycans are attached at residues Asn83 and Asn135. Ig-like V-type domains lie at 145–238 (GGKV…DLHV), 251–351 (GSSV…ETTF), 363–460 (GGSV…LKIV), and 464–563 (PNLK…VYVA). Disulfide bonds link Cys152–Cys221, Cys258–Cys324, Cys272–Cys280, Cys370–Cys443, Cys384–Cys394, Cys484–Cys546, Cys488–Cys522, and Cys498–Cys505. Asn291 carries an N-linked (GlcNAc...) asparagine glycan. Residue Asn423 is glycosylated (N-linked (GlcNAc...) asparagine). Residue Asn530 is glycosylated (N-linked (GlcNAc...) asparagine). The disordered stretch occupies residues 604–634 (FVDTQAKDPEDAAGGSIASADPGSSAGQGGS). The helical transmembrane segment at 637-659 (VVVSTLVPLALVLALGVLVVGVL) threads the bilayer. Over 660–762 (RARHRKNVDR…ANIQDGPSKA (103 aa)) the chain is Cytoplasmic.

As to quaternary structure, interacts (mainly via CDR1-like domain) with dimeric IgA. Interacts (mainly via CDR2-like domain) with pentameric IgM. In terms of assembly, either free or part of the secretory IgA (sIgA) complex that consists of two, four or five IgA monomers, and two additional non-Ig polypeptides, namely the JCHAIN and the secretory component (the proteolytic product of PIGR). Free secretory component interacts with bacterial antigens toxA of C.difficile and eae of E.coli. In terms of processing, N-glycosylated. Carries predominantly biantennary complex type glycans which are largely non-fucosylated. Sialylation with NeuAc is common, except for Asn-291 which carries exclusively high mannose glycans. N-glycans attached to Asn-83: Gal2GlcNAc2Man3GlcNAc2; Gal2GlcNAc2Man3GlcNAc2(Fuc); Gal1GlcNAc1Man4GlcNAc2(Fuc); Gal1GlcNAc1Man3GlcNAc2; Gal1GlcNAc1Man4GlcNAc2 and NeuAc1Gal2GlcNAc2Man3GlcNAc2. N-glycans attached to Asn-135: Gal2GlcNAc2Man3GlcNAc2; Gal1GlcNAc1Man3GlcNAc2 and NeuAc1Gal2GlcNAc2Man3GlcNAc2. N-glycans attached to Asn-291: Man5-8GlcNAc2. N-glycans attached to Asn-423: NeuAc1Gal2GlcNAc2Man3GlcNAc2. N-glycans attached to Asn-530: Gal2GlcNAc2Man3GlcNAc2; Gal1GlcNAc1Man3GlcNAc2 and NeuAc1Gal2GlcNAc2Man3GlcNAc2. N-glycosylation is required for anchoring IgA molecules to mucus but is not necessary for Ig binding.

Its subcellular location is the cell membrane. The protein localises to the secreted. Mediates selective transcytosis of polymeric IgA and IgM across mucosal epithelial cells. Binds polymeric IgA and IgM at the basolateral surface of epithelial cells. The complex is then transported across the cell to be secreted at the apical surface. During this process, a cleavage occurs that separates the extracellular (known as the secretory component) from the transmembrane segment. Its function is as follows. Through its N-linked glycans ensures anchoring of secretory IgA (sIgA) molecules to mucus lining the epithelial surface to neutralize extracellular pathogens. On its own (free form) may act as a non-specific microbial scavenger to prevent pathogen interaction with epithelial cells. This chain is Polymeric immunoglobulin receptor (PIGR), found in Equus asinus (Donkey).